The primary structure comprises 315 residues: MLEIEKPVIQCVESNDNGTYGKFEIEPLERGYGITLGNALRRILLSSLPGVAPTSVKIDSVLHEFSTITGVKEDVTEIILNLKMLALTMEGEGPKTIYIDAQGPGVVTGADIKTDGDVEVVNKDLHIATLDNDGKLYMEIVVNRGRGYVTQNKNKTEDLPLSAIAIDSIYTPVKRVNFSVQNTRVGQITDYDKLTLEIWTNGTIRIEEAISLSAKILIEHFKLFMTLTDNANDVEIMIEKEEDKKEKALEMTIEELDLSVRSYNCLKRAGINTVQELAGKSMDDMMKVRNLGKKSLEEVERKLNELGLNLRLNDE.

The alpha N-terminal domain (alpha-NTD) stretch occupies residues 1–228; that stretch reads MLEIEKPVIQ…EHFKLFMTLT (228 aa). The alpha C-terminal domain (alpha-CTD) stretch occupies residues 245-315; that stretch reads KEKALEMTIE…LGLNLRLNDE (71 aa).

This sequence belongs to the RNA polymerase alpha chain family. Homodimer. The RNAP catalytic core consists of 2 alpha, 1 beta, 1 beta' and 1 omega subunit. When a sigma factor is associated with the core the holoenzyme is formed, which can initiate transcription.

The enzyme catalyses RNA(n) + a ribonucleoside 5'-triphosphate = RNA(n+1) + diphosphate. In terms of biological role, DNA-dependent RNA polymerase catalyzes the transcription of DNA into RNA using the four ribonucleoside triphosphates as substrates. This chain is DNA-directed RNA polymerase subunit alpha, found in Clostridium perfringens (strain ATCC 13124 / DSM 756 / JCM 1290 / NCIMB 6125 / NCTC 8237 / Type A).